A 916-amino-acid chain; its full sequence is Internalin J (916 aa).

A signal peptide spans 1–25 (MKTSKIIIASLVSLTLVSNPILTFA). LRR repeat units follow at residues 94-115 (TLTS…EKLT), 116-136 (GLTK…SQNT), 137-157 (NLTY…TPLT), 158-179 (KLTY…QNPL), 180-200 (LTYL…HNTQ), 201-221 (LTEL…TPQT), 222-243 (QLTT…QNKL), 244-263 (LNRL…NQNI), 264-284 (QLTF…TPLT), 285-306 (QLTY…TLSK), 316-325 (DLLEIDLTHN), 338-357 (KIKE…DCQA), 359-368 (GITELDLSQN), and 380-402 (ELTK…NAHI). MucBP domains follow at residues 506–568 (PIKG…SQSV), 576–638 (IVAA…SQTV), 646–708 (IVAA…AQTV), 717–779 (APEK…SQTV), and 787–849 (IVAA…AQTV). A disordered region spans residues 862–888 (PLPDKKTTKPSNLKTTEVKKASDTLPK). An LPXTG sorting signal motif is present at residues 886–890 (LPKTG). T889 carries the pentaglycyl murein peptidoglycan amidated threonine modification. Residues 890–916 (GDSTPWKSALLGVFLSSTALVIWKKKK) constitute a propeptide, removed by sortase.

The protein belongs to the internalin family.

It is found in the secreted. The protein resides in the cell wall. Its function is as follows. Involved in several steps of L.monocytogenes infection, probably improves adhesin to host cells. The protein is Internalin J (inlJ) of Listeria monocytogenes serotype 4b (strain F2365).